Consider the following 491-residue polypeptide: 4,4'-diapolycopen-4-al dehydrogenase (491 aa).

The active site involves E208.

This sequence belongs to the carotenoid/retinoid oxidoreductase family. CrtN subfamily.

The enzyme catalyses all-trans-4,4'-diapolycopen-4-al + A + H2O = all-trans-4,4'-diapolycopen-4-oate + AH2 + H(+). It participates in carotenoid biosynthesis. Its function is as follows. Involved in the biosynthesis of the major C30 carotenoid methyl 4'-[6-O-(acylglycosyl)oxy]-4,4'-diapolycopen-4-oic acid via 4,4'-diapolycopen-4-oic acid intermediate. Catalyzes the oxidation of 4,4'-diapolycopen-4-al to yield 4,4'-diapolycopen-4-oic acid. The sequence is that of 4,4'-diapolycopen-4-al dehydrogenase from Metabacillus indicus (Bacillus indicus).